A 234-amino-acid chain; its full sequence is Thiamine-phosphate synthase (234 aa).

4-amino-2-methyl-5-(diphosphooxymethyl)pyrimidine contacts are provided by residues 52-56 (QYRSK) and Asn-84. Residues Asp-85 and Asp-104 each contribute to the Mg(2+) site. Residue Ser-123 participates in 4-amino-2-methyl-5-(diphosphooxymethyl)pyrimidine binding. 150–152 (SVT) serves as a coordination point for 2-[(2R,5Z)-2-carboxy-4-methylthiazol-5(2H)-ylidene]ethyl phosphate. A 4-amino-2-methyl-5-(diphosphooxymethyl)pyrimidine-binding site is contributed by Lys-153. Residue Gly-180 participates in 2-[(2R,5Z)-2-carboxy-4-methylthiazol-5(2H)-ylidene]ethyl phosphate binding.

Belongs to the thiamine-phosphate synthase family. Mg(2+) is required as a cofactor.

The catalysed reaction is 2-[(2R,5Z)-2-carboxy-4-methylthiazol-5(2H)-ylidene]ethyl phosphate + 4-amino-2-methyl-5-(diphosphooxymethyl)pyrimidine + 2 H(+) = thiamine phosphate + CO2 + diphosphate. It catalyses the reaction 2-(2-carboxy-4-methylthiazol-5-yl)ethyl phosphate + 4-amino-2-methyl-5-(diphosphooxymethyl)pyrimidine + 2 H(+) = thiamine phosphate + CO2 + diphosphate. It carries out the reaction 4-methyl-5-(2-phosphooxyethyl)-thiazole + 4-amino-2-methyl-5-(diphosphooxymethyl)pyrimidine + H(+) = thiamine phosphate + diphosphate. The protein operates within cofactor biosynthesis; thiamine diphosphate biosynthesis; thiamine phosphate from 4-amino-2-methyl-5-diphosphomethylpyrimidine and 4-methyl-5-(2-phosphoethyl)-thiazole: step 1/1. Condenses 4-methyl-5-(beta-hydroxyethyl)thiazole monophosphate (THZ-P) and 2-methyl-4-amino-5-hydroxymethyl pyrimidine pyrophosphate (HMP-PP) to form thiamine monophosphate (TMP). The chain is Thiamine-phosphate synthase from Nitrosospira multiformis (strain ATCC 25196 / NCIMB 11849 / C 71).